Consider the following 245-residue polypeptide: tRNA pseudouridine synthase A (245 aa).

Catalysis depends on D52, which acts as the Nucleophile. Substrate is bound at residue Y111.

It belongs to the tRNA pseudouridine synthase TruA family. In terms of assembly, homodimer.

The catalysed reaction is uridine(38/39/40) in tRNA = pseudouridine(38/39/40) in tRNA. Functionally, formation of pseudouridine at positions 38, 39 and 40 in the anticodon stem and loop of transfer RNAs. The protein is tRNA pseudouridine synthase A of Wolbachia pipientis wMel.